We begin with the raw amino-acid sequence, 329 residues long: MSAPSDPAVATHPQAGAAAAASSSSGLTFKLHPLVIVNVSDHHTRVKAQAACSGDGASSAAAGGQPPRVFGCVIGVQRGRTVEIFNSFELVLDPVSGTLDRAFLEKKQELYKKVFPDFYVLGWYSTGSDVRDTDMQIHKALMDINESPVYLLLNPAINLSQKDLPVTIYESELHVIDGSPQLIFVRANYTIETVEAERISVDHVAHLKPSDGGSAATQLAAHLTGIHSAIKMLNSRVRVIHQYLVSMQKGDMPLDNSLLRQVSSLVRRLPAMESEKFQDDFLMEYNDTLLMTYLAMFTNCSSTMNELVEKFNATYERSTARRGGRGAFM.

Residues 44 to 175 form the MPN domain; it reads TRVKAQAACS…VTIYESELHV (132 aa).

Belongs to the peptidase M67A family. CSN6 subfamily. Component of the CSN complex, probably composed of CSN1, CSN2, CSN3, CSN4, CSN5, CSN6, CSN7 and CSN8.

In terms of biological role, component of the COP9 signalosome complex (CSN), a complex involved in various cellular and developmental processes such as photomorphogenesis and response to hormones. The CSN complex is an essential regulator of the ubiquitin (Ubl) conjugation pathway by mediating the deneddylation of the cullin subunits of SCF-type E3 ligase complexes, leading to decrease the Ubl ligase activity of SCF. Involved in early response to iron deficiency. This chain is COP9 signalosome complex subunit 6, found in Oryza sativa subsp. japonica (Rice).